We begin with the raw amino-acid sequence, 275 residues long: Large ribosomal subunit protein uL2c (275 aa).

The interval 223–255 (VVMNPVDHPHGGGEGRAPIGRSRPVTPWGRPAL) is disordered.

Belongs to the universal ribosomal protein uL2 family. In terms of assembly, part of the 50S ribosomal subunit.

The protein resides in the plastid. It localises to the chloroplast. This chain is Large ribosomal subunit protein uL2c (rpl2), found in Pleurastrum terricola (Filamentous green alga).